The primary structure comprises 378 residues: MKILVDENMPYARDLFSRLGEVTAVPGRPIPVAQLADADALMVRSVTKVNESLLAGKPIKFVGTATAGTDHVDEAWLKQAGIGFSAAPGCNAIAVVEYVFSSLLMLAERDGFSLHERTVGIVGVGNVGRRLQARLEALGIKTLLCDPPRADRGDEGDFRSLDELVQHADILTFHTPLFKDGPYKTLHLADEKLIRSLKPGAILINACRGAVVDNTALLTCLSEGQKLSVVLDVWEGEPELNVELLKKVDIGTPHIAGYTLEGKARGTTQVFEAYSKFIGHEQHVALDTLLPAPEFGRITLHGPLDQPTLKRLVHLVYDVRRDDAPLRKVAGIPGEFDKLRKNYLERREWSSLYVICDDASAASLLCKLGFNAVHHPAR.

Substrate is bound by residues Ser-45 and Thr-66. Positions 146 and 175 each coordinate NAD(+). Arg-208 is an active-site residue. Residue Asp-232 coordinates NAD(+). The active site involves Glu-237. The active-site Proton donor is His-254. Gly-257 is a binding site for NAD(+). A substrate-binding site is contributed by Tyr-258.

It belongs to the D-isomer specific 2-hydroxyacid dehydrogenase family. PdxB subfamily. Homodimer.

The protein resides in the cytoplasm. The catalysed reaction is 4-phospho-D-erythronate + NAD(+) = (R)-3-hydroxy-2-oxo-4-phosphooxybutanoate + NADH + H(+). It functions in the pathway cofactor biosynthesis; pyridoxine 5'-phosphate biosynthesis; pyridoxine 5'-phosphate from D-erythrose 4-phosphate: step 2/5. In terms of biological role, catalyzes the oxidation of erythronate-4-phosphate to 3-hydroxy-2-oxo-4-phosphonooxybutanoate. The polypeptide is Erythronate-4-phosphate dehydrogenase (Escherichia coli O45:K1 (strain S88 / ExPEC)).